Consider the following 127-residue polypeptide: Small ribosomal subunit protein uS12 (127 aa).

D89 carries the 3-methylthioaspartic acid modification.

The protein belongs to the universal ribosomal protein uS12 family. As to quaternary structure, part of the 30S ribosomal subunit. Contacts proteins S8 and S17. May interact with IF1 in the 30S initiation complex.

Functionally, with S4 and S5 plays an important role in translational accuracy. In terms of biological role, interacts with and stabilizes bases of the 16S rRNA that are involved in tRNA selection in the A site and with the mRNA backbone. Located at the interface of the 30S and 50S subunits, it traverses the body of the 30S subunit contacting proteins on the other side and probably holding the rRNA structure together. The combined cluster of proteins S8, S12 and S17 appears to hold together the shoulder and platform of the 30S subunit. The polypeptide is Small ribosomal subunit protein uS12 (Nautilia profundicola (strain ATCC BAA-1463 / DSM 18972 / AmH)).